The chain runs to 163 residues: Putative 4-hydroxy-4-methyl-2-oxoglutarate aldolase (163 aa).

Substrate is bound by residues 76-79 (GDML) and R98. D99 provides a ligand contact to a divalent metal cation.

The protein belongs to the class II aldolase/RraA-like family. Homotrimer. It depends on a divalent metal cation as a cofactor.

It carries out the reaction 4-hydroxy-4-methyl-2-oxoglutarate = 2 pyruvate. The enzyme catalyses oxaloacetate + H(+) = pyruvate + CO2. Functionally, catalyzes the aldol cleavage of 4-hydroxy-4-methyl-2-oxoglutarate (HMG) into 2 molecules of pyruvate. Also contains a secondary oxaloacetate (OAA) decarboxylase activity due to the common pyruvate enolate transition state formed following C-C bond cleavage in the retro-aldol and decarboxylation reactions. This Pseudomonas putida (strain GB-1) protein is Putative 4-hydroxy-4-methyl-2-oxoglutarate aldolase.